The sequence spans 313 residues: Pyrimidine-specific ribonucleoside hydrolase RihB (313 aa).

Asp-11 (proton acceptor) is an active-site residue. Asp-11, Asp-16, and Val-124 together coordinate Ca(2+). Substrate contacts are provided by Gln-227 and His-239. Asp-240 provides a ligand contact to Ca(2+).

It belongs to the IUNH family. RihB subfamily. As to quaternary structure, homotetramer. Requires Ca(2+) as cofactor.

It carries out the reaction a pyrimidine ribonucleoside + H2O = a pyrimidine nucleobase + D-ribose. Functionally, hydrolyzes cytidine or uridine to ribose and cytosine or uracil, respectively. Has a clear preference for cytidine over uridine. Strictly specific for ribonucleosides. The chain is Pyrimidine-specific ribonucleoside hydrolase RihB from Escherichia coli O17:K52:H18 (strain UMN026 / ExPEC).